An 87-amino-acid polypeptide reads, in one-letter code: U24 protein (87 aa).

At Thr-6 the chain carries Phosphothreonine. The PPXY motif motif lies at 8–11 (PPSY). A helical transmembrane segment spans residues 59–79 (FLVLTGLAIAMILFIVFVLYV).

Interacts with host ITCH; this interaction probably mediates ITCH degradation. Interacts probably with NEDD4.

Its subcellular location is the membrane. In terms of biological role, down-regulates the TCR/CD3E complex and the transferrin receptor TFRC in host T-cells by blocking them from recycling back to the cell surface. The protein is U24 protein (U24) of Homo sapiens (Human).